The following is a 361-amino-acid chain: MLLELARWLAQDIRGFNVFNYITLRAVLATLTALTISFLVGPKLIRKLTEYKVGQSVRDDGPQTHLVKAGTPTMGGALILIAIVISTLLWADLSNRFVWVVLITTLGFGVIGWVDDWRKVVYRNPKGLSAKAKYFWQSLIGAGVAAYLFHTATVPAETELIVPFFKHLVLPLGAVSFIVLTYFVIVGTSNAVNLTDGLDGLAIMPTVMVASALAVFAYVAGHLYFSKYLGVPYVPGAGELTVFCAAIGGAGLGFLWFNAYPAEVFMGDVGALALGAALGTVAVIVRQEIVLFIMGGVFVMETISVMLQVGSFKLTGKRIFRMAPLHHHYELKGWKETQVVVRFWIITMMLVLVGLSTLKLR.

10 consecutive transmembrane segments (helical) span residues 21–41, 73–93, 97–117, 134–154, 168–188, 200–220, 237–257, 264–284, 289–309, and 338–358; these read YITLRAVLATLTALTISFLVG, TMGGALILIAIVISTLLWADL, FVWVVLITTLGFGVIGWVDDW, YFWQSLIGAGVAAYLFHTATV, LVLPLGAVSFIVLTYFVIVGT, GLAIMPTVMVASALAVFAYVA, AGELTVFCAAIGGAGLGFLWF, VFMGDVGALALGAALGTVAVI, IVLFIMGGVFVMETISVMLQV, and QVVVRFWIITMMLVLVGLSTL.

This sequence belongs to the glycosyltransferase 4 family. MraY subfamily. Mg(2+) is required as a cofactor.

It is found in the cell inner membrane. It carries out the reaction UDP-N-acetyl-alpha-D-muramoyl-L-alanyl-gamma-D-glutamyl-meso-2,6-diaminopimeloyl-D-alanyl-D-alanine + di-trans,octa-cis-undecaprenyl phosphate = di-trans,octa-cis-undecaprenyl diphospho-N-acetyl-alpha-D-muramoyl-L-alanyl-D-glutamyl-meso-2,6-diaminopimeloyl-D-alanyl-D-alanine + UMP. The protein operates within cell wall biogenesis; peptidoglycan biosynthesis. Functionally, catalyzes the initial step of the lipid cycle reactions in the biosynthesis of the cell wall peptidoglycan: transfers peptidoglycan precursor phospho-MurNAc-pentapeptide from UDP-MurNAc-pentapeptide onto the lipid carrier undecaprenyl phosphate, yielding undecaprenyl-pyrophosphoryl-MurNAc-pentapeptide, known as lipid I. This Methylobacillus flagellatus (strain ATCC 51484 / DSM 6875 / VKM B-1610 / KT) protein is Phospho-N-acetylmuramoyl-pentapeptide-transferase.